Reading from the N-terminus, the 91-residue chain is Large ribosomal subunit protein bL27 (91 aa).

Residues 1–20 are disordered; it reads MAHKKGVGSSKNGRDSNPKY.

Belongs to the bacterial ribosomal protein bL27 family.

This chain is Large ribosomal subunit protein bL27, found in Deinococcus geothermalis (strain DSM 11300 / CIP 105573 / AG-3a).